A 228-amino-acid chain; its full sequence is Mediator of RNA polymerase II transcription subunit 7-B (228 aa).

The protein belongs to the Mediator complex subunit 7 family. Component of the Mediator complex.

Its subcellular location is the nucleus. Component of the Mediator complex, a coactivator involved in the regulated transcription of nearly all RNA polymerase II-dependent genes. Mediator functions as a bridge to convey information from gene-specific regulatory proteins to the basal RNA polymerase II transcription machinery. Mediator is recruited to promoters by direct interactions with regulatory proteins and serves as a scaffold for the assembly of a functional preinitiation complex with RNA polymerase II and the general transcription factors. The polypeptide is Mediator of RNA polymerase II transcription subunit 7-B (med7-b) (Xenopus laevis (African clawed frog)).